A 225-amino-acid chain; its full sequence is Endonuclease V (225 aa).

The Mg(2+) site is built by D43 and D110.

It belongs to the endonuclease V family. Mg(2+) serves as cofactor.

It localises to the cytoplasm. It catalyses the reaction Endonucleolytic cleavage at apurinic or apyrimidinic sites to products with a 5'-phosphate.. Functionally, DNA repair enzyme involved in the repair of deaminated bases. Selectively cleaves double-stranded DNA at the second phosphodiester bond 3' to a deoxyinosine leaving behind the intact lesion on the nicked DNA. This chain is Endonuclease V, found in Thermotoga neapolitana (strain ATCC 49049 / DSM 4359 / NBRC 107923 / NS-E).